Here is a 211-residue protein sequence, read N- to C-terminus: Uracil phosphoribosyltransferase (211 aa).

5-phospho-alpha-D-ribose 1-diphosphate is bound by residues Arg-78, Arg-103, and Asp-130–Ser-138. Residues Ile-193 and Gly-198–Ala-200 each bind uracil. Asp-199 contributes to the 5-phospho-alpha-D-ribose 1-diphosphate binding site.

This sequence belongs to the UPRTase family. Requires Mg(2+) as cofactor.

It carries out the reaction UMP + diphosphate = 5-phospho-alpha-D-ribose 1-diphosphate + uracil. The protein operates within pyrimidine metabolism; UMP biosynthesis via salvage pathway; UMP from uracil: step 1/1. Allosterically activated by GTP. In terms of biological role, catalyzes the conversion of uracil and 5-phospho-alpha-D-ribose 1-diphosphate (PRPP) to UMP and diphosphate. The polypeptide is Uracil phosphoribosyltransferase (Acinetobacter baylyi (strain ATCC 33305 / BD413 / ADP1)).